Consider the following 205-residue polypeptide: Holliday junction branch migration complex subunit RuvA (205 aa).

The tract at residues 1-64 (MIGRLRGTLA…EDAHLLYGFA (64 aa)) is domain I. The segment at 65 to 143 (EKRERELFRE…AWETSPAMFT (79 aa)) is domain II. Residues 144–154 (LVSDGPLPVAS) form a flexible linker region. The interval 154–205 (SESSAEADAVSALVSLGYKPQEASKAIAAIKDKAGLSSEELIRRSLKGMIAK) is domain III.

It belongs to the RuvA family. Homotetramer. Forms an RuvA(8)-RuvB(12)-Holliday junction (HJ) complex. HJ DNA is sandwiched between 2 RuvA tetramers; dsDNA enters through RuvA and exits via RuvB. An RuvB hexamer assembles on each DNA strand where it exits the tetramer. Each RuvB hexamer is contacted by two RuvA subunits (via domain III) on 2 adjacent RuvB subunits; this complex drives branch migration. In the full resolvosome a probable DNA-RuvA(4)-RuvB(12)-RuvC(2) complex forms which resolves the HJ.

It is found in the cytoplasm. The RuvA-RuvB-RuvC complex processes Holliday junction (HJ) DNA during genetic recombination and DNA repair, while the RuvA-RuvB complex plays an important role in the rescue of blocked DNA replication forks via replication fork reversal (RFR). RuvA specifically binds to HJ cruciform DNA, conferring on it an open structure. The RuvB hexamer acts as an ATP-dependent pump, pulling dsDNA into and through the RuvAB complex. HJ branch migration allows RuvC to scan DNA until it finds its consensus sequence, where it cleaves and resolves the cruciform DNA. The protein is Holliday junction branch migration complex subunit RuvA of Pseudomonas entomophila (strain L48).